A 154-amino-acid chain; its full sequence is Probable chemoreceptor glutamine deamidase CheD (154 aa).

Belongs to the CheD family.

The enzyme catalyses L-glutaminyl-[protein] + H2O = L-glutamyl-[protein] + NH4(+). Its function is as follows. Probably deamidates glutamine residues to glutamate on methyl-accepting chemotaxis receptors (MCPs), playing an important role in chemotaxis. This Methanococcus vannielii (strain ATCC 35089 / DSM 1224 / JCM 13029 / OCM 148 / SB) protein is Probable chemoreceptor glutamine deamidase CheD.